The primary structure comprises 256 residues: Small ribosomal subunit protein uS3 (256 aa).

The 83-residue stretch at 39–121 (IRTYLTKQLS…TIRINVVEVT (83 aa)) folds into the KH type-2 domain. The disordered stretch occupies residues 227 to 256 (RHEQKFPLQQPKRRQQRRRPTFEDRSAQEA). The segment covering 246-256 (PTFEDRSAQEA) has biased composition (basic and acidic residues).

Belongs to the universal ribosomal protein uS3 family. Part of the 30S ribosomal subunit. Forms a tight complex with proteins S10 and S14.

Functionally, binds the lower part of the 30S subunit head. Binds mRNA in the 70S ribosome, positioning it for translation. This Synechococcus sp. (strain JA-2-3B'a(2-13)) (Cyanobacteria bacterium Yellowstone B-Prime) protein is Small ribosomal subunit protein uS3.